Consider the following 274-residue polypeptide: MENIKQRIIDAFEQRDQINARTENDDLREAVRYVIDEIDRGELRVAEKVSGEWVVHQWLKKAVLLSFRLNDNDLIEGGETRFWDKVPAKFADYDSARFRAEGMRVVPPAMVRKGAFIGRNVVVMPSYVNIGAHVGEGTMVDTWATVGSCAQIGKNVHLSGGVGIGGVLEPLQANPTIIEDNCFIGARSEIVEGVIVEEGAVISMGVYIGQSTRIYDRENDRILYGRVPSGSVVVPGSLPSANGTHSLYAAIIVKRVDAKTRAKVGINALLRSAE.

The substrate site is built by arginine 104 and aspartate 141.

This sequence belongs to the transferase hexapeptide repeat family. Homotrimer.

It localises to the cytoplasm. The enzyme catalyses (S)-2,3,4,5-tetrahydrodipicolinate + succinyl-CoA + H2O = (S)-2-succinylamino-6-oxoheptanedioate + CoA. It functions in the pathway amino-acid biosynthesis; L-lysine biosynthesis via DAP pathway; LL-2,6-diaminopimelate from (S)-tetrahydrodipicolinate (succinylase route): step 1/3. The chain is 2,3,4,5-tetrahydropyridine-2,6-dicarboxylate N-succinyltransferase from Idiomarina loihiensis (strain ATCC BAA-735 / DSM 15497 / L2-TR).